Here is a 493-residue protein sequence, read N- to C-terminus: 3-octaprenyl-4-hydroxybenzoate carboxy-lyase (493 aa).

Residue N172 participates in Mn(2+) binding. Prenylated FMN contacts are provided by residues 175–177 (IYR), 189–191 (RWL), and 194–195 (RG). E238 contributes to the Mn(2+) binding site. The Proton donor role is filled by D287.

This sequence belongs to the UbiD family. In terms of assembly, homohexamer. Requires prenylated FMN as cofactor. Mn(2+) is required as a cofactor.

It is found in the cell membrane. The catalysed reaction is a 4-hydroxy-3-(all-trans-polyprenyl)benzoate + H(+) = a 2-(all-trans-polyprenyl)phenol + CO2. The protein operates within cofactor biosynthesis; ubiquinone biosynthesis. In terms of biological role, catalyzes the decarboxylation of 3-octaprenyl-4-hydroxy benzoate to 2-octaprenylphenol, an intermediate step in ubiquinone biosynthesis. The chain is 3-octaprenyl-4-hydroxybenzoate carboxy-lyase from Shewanella sediminis (strain HAW-EB3).